The sequence spans 312 residues: Glycerol-3-phosphate dehydrogenase [NAD(P)+] (312 aa).

4 residues coordinate NADPH: tryptophan 11, arginine 30, arginine 31, and lysine 95. Sn-glycerol 3-phosphate contacts are provided by lysine 95, glycine 123, and serine 125. Alanine 127 contributes to the NADPH binding site. Sn-glycerol 3-phosphate is bound by residues lysine 177, aspartate 230, serine 240, arginine 241, and asparagine 242. The active-site Proton acceptor is the lysine 177. Arginine 241 contributes to the NADPH binding site. NADPH contacts are provided by valine 265 and glutamate 267.

This sequence belongs to the NAD-dependent glycerol-3-phosphate dehydrogenase family.

Its subcellular location is the cytoplasm. It carries out the reaction sn-glycerol 3-phosphate + NAD(+) = dihydroxyacetone phosphate + NADH + H(+). The catalysed reaction is sn-glycerol 3-phosphate + NADP(+) = dihydroxyacetone phosphate + NADPH + H(+). It functions in the pathway membrane lipid metabolism; glycerophospholipid metabolism. Catalyzes the reduction of the glycolytic intermediate dihydroxyacetone phosphate (DHAP) to sn-glycerol 3-phosphate (G3P), the key precursor for phospholipid synthesis. The polypeptide is Glycerol-3-phosphate dehydrogenase [NAD(P)+] (Helicobacter pylori (strain Shi470)).